The primary structure comprises 371 residues: tRNA-specific 2-thiouridylase MnmA (371 aa).

ATP is bound by residues 13–20 (GMSGGVDS) and methionine 39. The tract at residues 99–101 (NPD) is interaction with target base in tRNA. Catalysis depends on cysteine 104, which acts as the Nucleophile. Cysteine 104 and cysteine 200 are oxidised to a cystine. Position 128 (glycine 128) interacts with ATP. The interval 150–152 (KDQ) is interaction with tRNA. The active-site Cysteine persulfide intermediate is cysteine 200. An interaction with tRNA region spans residues 308 to 309 (RY).

This sequence belongs to the MnmA/TRMU family.

Its subcellular location is the cytoplasm. It carries out the reaction S-sulfanyl-L-cysteinyl-[protein] + uridine(34) in tRNA + AH2 + ATP = 2-thiouridine(34) in tRNA + L-cysteinyl-[protein] + A + AMP + diphosphate + H(+). Functionally, catalyzes the 2-thiolation of uridine at the wobble position (U34) of tRNA, leading to the formation of s(2)U34. The protein is tRNA-specific 2-thiouridylase MnmA of Bacillus cereus (strain ATCC 14579 / DSM 31 / CCUG 7414 / JCM 2152 / NBRC 15305 / NCIMB 9373 / NCTC 2599 / NRRL B-3711).